The following is a 563-amino-acid chain: Cytidine monophosphate-N-acetylneuraminic acid hydroxylase (563 aa).

The Rieske domain occupies 10 to 108; that stretch reads LSPAETANLK…VEMDGNDGLF (99 aa). 4 residues coordinate [2Fe-2S] cluster: Cys-50, His-52, Cys-71, and His-74.

Belongs to the CMP-Neu5Ac hydroxylase family. [2Fe-2S] cluster is required as a cofactor.

Its subcellular location is the cytoplasm. It catalyses the reaction CMP-N-acetyl-beta-neuraminate + 2 Fe(II)-[cytochrome b5] + O2 + 2 H(+) = CMP-N-glycoloyl-beta-neuraminate + 2 Fe(III)-[cytochrome b5] + H2O. It participates in amino-sugar metabolism; N-acetylneuraminate metabolism. Sialic acids are components of carbohydrate chains of glycoconjugates and are involved in cell-cell recognition and cell-pathogen interactions. Catalyzes the conversion of CMP-N-acetylneuraminic acid (CMP-Neu5Ac) into its hydroxylated derivative CMP-N-glycolylneuraminic acid (CMP-Neu5Gc), a sialic acid abundantly expressed at the surface of many cells. In Cricetulus griseus (Chinese hamster), this protein is Cytidine monophosphate-N-acetylneuraminic acid hydroxylase (CMAH).